We begin with the raw amino-acid sequence, 158 residues long: MMINTQEDKLVSAHDAEEFLRFFNCHDSALQQEATTLLTREAHLLDIQAYRTWLEHCVGSEVQYQVISRELRAASERRYKLNEAMNVYNENFQQLKVRVEHQLDSQNWSNSPKLRFTRFITNVQAAMDVNDEDLLHVRSNVVLHRARRGNQVDVFYAA.

It belongs to the bacterial ring-hydroxylating dioxygenase beta subunit family. In terms of assembly, the naphthalene dioxygenase (NDO) multicomponent enzyme system is composed of an electron transfer component and a dioxygenase component (iron sulfur protein (ISP)). The electron transfer component is composed of a ferredoxin reductase (NdoR) and a ferredoxin (NdoA), and the dioxygenase component is formed of a heterohexamer (trimer of heterodimers) of three large alpha subunits (NdoB) and three small beta subunits (NdoC).

The protein operates within aromatic compound metabolism; naphthalene degradation. In terms of biological role, component of the naphthalene dioxygenase (NDO) multicomponent enzyme system which catalyzes the incorporation of both atoms of molecular oxygen into naphthalene to form cis-(1R,2S)-dihydroxy-1,2-dihydronaphthalene. The beta subunit seems to have a structural role in the holoenzyme. This is Naphthalene 1,2-dioxygenase system, small oxygenase component from Pseudomonas fluorescens.